Consider the following 86-residue polypeptide: MANSKQAKKRAGQSEKRRQHNASRRSMMRTLVKKVLAAIEAGDKEVATKELAAATPTLDRYASKGLIHKNKAARSKSRLNAAIKAL.

The interval 1–27 is disordered; that stretch reads MANSKQAKKRAGQSEKRRQHNASRRSM.

The protein belongs to the bacterial ribosomal protein bS20 family.

Its function is as follows. Binds directly to 16S ribosomal RNA. The polypeptide is Small ribosomal subunit protein bS20 (Colwellia psychrerythraea (strain 34H / ATCC BAA-681) (Vibrio psychroerythus)).